A 535-amino-acid chain; its full sequence is uncharacterized protein (535 aa).

Disordered regions lie at residues M1–P58, E211–I254, R313–K353, R376–L416, Q421–W440, and S508–D535. Over residues I22–E34 the composition is skewed to basic and acidic residues. The segment at A179–R342 is SNW. A compositionally biased stretch (basic and acidic residues) spans R376–E393. The span at E511 to D535 shows a compositional bias: basic and acidic residues.

This sequence belongs to the SNW family.

This is an uncharacterized protein from Caenorhabditis elegans.